The sequence spans 35 residues: Alpha-amanitin proprotein (35 aa).

The propeptide occupies 1–10 (MSDINATRLP). Position 11 is a (3R,4R)-4,5-dihydroxyisoleucine; in form alpha-amanitin (Ile11). The residue at position 11 (Ile11) is a (3R,4S)-4-hydroxyisoleucine; in form gamma-amanitin. The segment at residues 11-18 (IWGIGCNP) is a cross-link (cyclopeptide (Ile-Pro)). Residues 12–16 (WGIGC) constitute a cross-link (2'-cysteinyl-6'-hydroxytryptophan sulfoxide (Trp-Cys)). Pro18 carries the post-translational modification 4-hydroxyproline. A propeptide spanning residues 19 to 35 (CVGDDVTTLLTRGEALC) is cleaved from the precursor.

The protein belongs to the MSDIN fungal toxin family. Processed by the macrocyclase-peptidase enzyme POPB to yield a toxic cyclic decapeptide. POPB first removes 10 residues from the N-terminus. Conformational trapping of the remaining peptide forces the enzyme to release this intermediate rather than proceed to macrocyclization. The enzyme rebinds the remaining peptide in a different conformation and catalyzes macrocyclization of the N-terminal 8 residues.

Major toxin belonging to the bicyclic octapeptides amatoxins that acts by binding non-competitively to RNA polymerase II and greatly slowing the elongation of transcripts from target promoters. This is Alpha-amanitin proprotein from Amanita bisporigera (Destroying angel).